A 74-amino-acid chain; its full sequence is Large ribosomal subunit protein bL31 (74 aa).

The Zn(2+) site is built by Cys-16, Cys-18, Cys-38, and Cys-41.

It belongs to the bacterial ribosomal protein bL31 family. Type A subfamily. In terms of assembly, part of the 50S ribosomal subunit. The cofactor is Zn(2+).

In terms of biological role, binds the 23S rRNA. The protein is Large ribosomal subunit protein bL31 of Salinispora tropica (strain ATCC BAA-916 / DSM 44818 / JCM 13857 / NBRC 105044 / CNB-440).